The chain runs to 317 residues: CTP-dependent diacylglycerol kinase 1 (317 aa).

A disordered region spans residues 1–44 (MANEEELQTAESAFVTGARRYSNDYSESESSSKHSGCSTPVEGT). Residues 1 to 130 (MANEEELQTA…DVDYRNVRLP (130 aa)) lie on the Lumenal side of the membrane. Residues 23–38 (NDYSESESSSKHSGCS) show a composition bias toward low complexity. The helical transmembrane segment at 131–151 (LIVGFVHVLLLDVIRLHWPAF) threads the bilayer. Over 152–167 (NTLYCQVTGLLMRKKE) the chain is Cytoplasmic. Residues 168–188 (VHTYNGVLWYLLGLIFAFSFF) form a helical membrane-spanning segment. Over 189-190 (SK) the chain is Lumenal. A helical membrane pass occupies residues 191–211 (DVALVSLFLLSWCDTAASTVG). Topologically, residues 212 to 230 (RLYGHLTPRISRNKSLAGS) are cytoplasmic. A helical membrane pass occupies residues 231–251 (LAAFVVGVISCAVFYGYFVPA). Residues 252 to 271 (YSHVNHPGEIMWNPETSRLS) lie on the Lumenal side of the membrane. Residues 272 to 292 (LVQLSLLGGFVASLSEGIDLF) traverse the membrane as a helical segment. A topological domain (cytoplasmic) is located at residue N293. The chain crosses the membrane as a helical span at residues 294–314 (WDDNFTIPVLSAIFMHTIIAF). Topologically, residues 315 to 317 (SQR) are lumenal.

This sequence belongs to the DGK1 family. Ca(2+) serves as cofactor. Mg(2+) is required as a cofactor.

The protein localises to the endoplasmic reticulum membrane. It localises to the nucleus membrane. It carries out the reaction a 1,2-diacyl-sn-glycerol + CTP = a 1,2-diacyl-sn-glycero-3-phosphate + CDP + H(+). Functionally, CTP-dependent diacylglycerol kinase that catalyzes the phosphorylation of diacylglycerol (DAG) to phosphatidate (PA). Controls phosphatidate levels at the nuclear envelope. May be involved in vesicle trafficking between the endoplasmic reticulum and the Golgi apparatus. This Eremothecium gossypii (strain ATCC 10895 / CBS 109.51 / FGSC 9923 / NRRL Y-1056) (Yeast) protein is CTP-dependent diacylglycerol kinase 1 (DGK1).